The primary structure comprises 1064 residues: Alpha-aminoadipic semialdehyde synthase (1064 aa).

A lysine-ketoglutarate reductase region spans residues 24–445; sequence VNKWERRTPL…RACISYRGEL (422 aa). The residue at position 238 (T238) is a Phosphothreonine. S458 is subject to Phosphoserine. Residues 583–1064 are saccharopine dehydrogenase; sequence MTKKSGVLIL…YGIKLMEKAE (482 aa). L-saccharopine-binding positions include 703 to 704, D730, R830, and 852 to 854; these read SY and TLR. Residue 729–731 participates in NADP(+) binding; that stretch reads LDP.

It in the N-terminal section; belongs to the AlaDH/PNT family. In the C-terminal section; belongs to the saccharopine dehydrogenase family. Homodimer. Phosphorylation of Ser-458 seems important for the LKR activity. In terms of tissue distribution, ubiquitous, with higher levels in flowers. Isoform Long is mostly present in young leaves, cotyledons, root tips and mature root parts. Whereas isoform Short is mostly expressed in cotyledons and at low levels in all root parts.

The protein resides in the cytoplasm. The catalysed reaction is L-saccharopine + NADP(+) + H2O = L-lysine + 2-oxoglutarate + NADPH + H(+). It catalyses the reaction L-saccharopine + NAD(+) + H2O = (S)-2-amino-6-oxohexanoate + L-glutamate + NADH + H(+). It participates in amino-acid degradation; L-lysine degradation via saccharopine pathway; glutaryl-CoA from L-lysine: step 1/6. It functions in the pathway amino-acid degradation; L-lysine degradation via saccharopine pathway; glutaryl-CoA from L-lysine: step 2/6. With respect to regulation, the LKR activity is stimulated by NaCl. In terms of biological role, bifunctional enzyme that catalyzes the first two steps in lysine degradation. The N-terminal and the C-terminal contain lysine-oxoglutarate reductase and saccharopine dehydrogenase activity, respectively. Negatively regulates free Lys accumulation in seeds. In Arabidopsis thaliana (Mouse-ear cress), this protein is Alpha-aminoadipic semialdehyde synthase (LKR/SDH).